Here is a 441-residue protein sequence, read N- to C-terminus: Trigger factor (441 aa).

The 86-residue stretch at 161 to 246 (GDQVTIDFVG…VSEVAEQILP (86 aa)) folds into the PPIase FKBP-type domain.

The protein belongs to the FKBP-type PPIase family. Tig subfamily.

Its subcellular location is the cytoplasm. The catalysed reaction is [protein]-peptidylproline (omega=180) = [protein]-peptidylproline (omega=0). In terms of biological role, involved in protein export. Acts as a chaperone by maintaining the newly synthesized protein in an open conformation. Functions as a peptidyl-prolyl cis-trans isomerase. In Marinomonas sp. (strain MWYL1), this protein is Trigger factor.